The primary structure comprises 286 residues: Spermidine/putrescine transport system permease protein PotB (286 aa).

At 1 to 13 (MKIINNKFQKITV) the chain is on the cytoplasmic side. Residues 14–33 (AIIFSWLIFFVLIPNLLVLA) form a helical membrane-spanning segment. The Periplasmic segment spans residues 34-71 (VSFLTRDGSNFYAFPITIENYTNLFNPLYAQVVWNSLS). The ABC transmembrane type-1 domain occupies 66–274 (VWNSLSMSGI…MALLIFVYYR (209 aa)). The helical transmembrane segment at 72 to 91 (MSGIATIICLLIGYPFAFMM) threads the bilayer. Over 92 to 100 (SKIHPKYRP) the chain is Cytoplasmic. A helical membrane pass occupies residues 101-120 (LLLFLVVLPFWTNSLIRIYG). The Periplasmic portion of the chain corresponds to 121 to 151 (MKVFLGVKGILNTMLIDMGILSAPIRILNTE). Residues 152 to 171 (IAVIIGLVYLLLPFMILPLY) form a helical membrane-spanning segment. At 172–199 (SAIEKLDNRLLEAARDLGANTFQRFFRV) the chain is on the cytoplasmic side. The helical transmembrane segment at 200–219 (ILPLTMPGIIAGCLLVLLPA) threads the bilayer. Over 220–252 (MGMFYVADLLGGAKVLLVGNVIKSEFLISRNWP) the chain is Periplasmic. A helical transmembrane segment spans residues 253-272 (FGSAVSIGLTVLMALLIFVY). Residues 273-286 (YRANKLLNRKVELE) lie on the Cytoplasmic side of the membrane.

It belongs to the binding-protein-dependent transport system permease family. CysTW subfamily.

Its subcellular location is the cell inner membrane. Its function is as follows. Required for the activity of the bacterial periplasmic transport system of putrescine and spermidine. The chain is Spermidine/putrescine transport system permease protein PotB (potB) from Haemophilus influenzae (strain ATCC 51907 / DSM 11121 / KW20 / Rd).